Consider the following 535-residue polypeptide: MKDYTLSEFLNRRLALLGERNNLSLLEQCLHGIERECLRVTATAELACTPHPQALGAALTNGQVTTDYSESLLEFITPALKNPAETIDNLDRIHRFVYSKLGDELLWSPSMPCPLPDEEHIPIAYYGTSNIGKLKYVYRKGLALRYGKTMQCIAGIHYNFSLPEDAWALLKQTEDFAGDARDYQSHSYIALIRNFRRYSWLLMYLFGASPALDAGFLRGRKHQLEQHFDADTLYLPYATSLRMSDLGYQSDAQADLTPCYNDLVSYTDSLRKAVATPYKPYVEVGTHDQNGEWVQLNTNVLQIENEYYSNIRPKRVTYSGERPIQALVARGVQYVEVRCLDINPFLPTGISLEQSRFIDAFVLYCALEESQQLARHECSNASSNFLSVVKEGRRPGLSLMRDNRPVDLKIWATELMEKITPIARLLDQAQGTDEHLKSIAVQQAKIDDTALTPSAQVLASMEAHNEGFTAFSLRQSQVHAEYFRTHPLSAQEQADFEAQAKTSIEEQAELEATEEVVDFDTFVGSYQASILSISN.

It belongs to the glutamate--cysteine ligase type 1 family. Type 1 subfamily.

It carries out the reaction L-cysteine + L-glutamate + ATP = gamma-L-glutamyl-L-cysteine + ADP + phosphate + H(+). It functions in the pathway sulfur metabolism; glutathione biosynthesis; glutathione from L-cysteine and L-glutamate: step 1/2. This is Glutamate--cysteine ligase from Pseudomonas syringae pv. syringae.